Reading from the N-terminus, the 165-residue chain is HTH-type transcriptional regulator IscR (165 aa).

One can recognise an HTH rrf2-type domain in the interval 2-131 (RLTSKGRYAV…NNITLAELVS (130 aa)). The H-T-H motif DNA-binding region spans 28 to 51 (LAEISERQGISLSYLEQLFSRLRK). 3 residues coordinate [2Fe-2S] cluster: cysteine 92, cysteine 98, and cysteine 104. The disordered stretch occupies residues 144–165 (NDTRRPLTNGRPQETINVNLHA). Polar residues predominate over residues 153 to 165 (GRPQETINVNLHA).

[2Fe-2S] cluster is required as a cofactor.

Its function is as follows. Regulates the transcription of several operons and genes involved in the biogenesis of Fe-S clusters and Fe-S-containing proteins. This Sodalis glossinidius (strain morsitans) protein is HTH-type transcriptional regulator IscR.